The sequence spans 375 residues: Outer membrane porin OmpD (375 aa).

The N-terminal stretch at 1-34 (MRKHAKKIIRIIKMKLKLVAVAVTSLLAAGVVNA) is a signal peptide.

It belongs to the Gram-negative porin family. As to quaternary structure, homotrimer. Mixed heterotrimers with other porins are also probable.

It is found in the cell outer membrane. In terms of biological role, forms pores that allow passive diffusion of small molecules across the outer membrane. This chain is Outer membrane porin OmpD, found in Salmonella typhimurium (strain SL1344).